A 48-amino-acid polypeptide reads, in one-letter code: Thiamine thiazole synthase, chloroplastic (48 aa).

Substrate contacts are provided by Ala-18 and Val-40.

Belongs to the THI4 family. As to quaternary structure, homooctamer. Fe cation is required as a cofactor.

The protein localises to the plastid. The protein resides in the chloroplast. The catalysed reaction is [ADP-thiazole synthase]-L-cysteine + glycine + NAD(+) = [ADP-thiazole synthase]-dehydroalanine + ADP-5-ethyl-4-methylthiazole-2-carboxylate + nicotinamide + 3 H2O + 2 H(+). In terms of biological role, involved in biosynthesis of the thiamine precursor thiazole. Catalyzes the conversion of NAD and glycine to adenosine diphosphate 5-(2-hydroxyethyl)-4-methylthiazole-2-carboxylic acid (ADT), an adenylated thiazole intermediate. The reaction includes an iron-dependent sulfide transfer from a conserved cysteine residue of the protein to a thiazole intermediate. The enzyme can only undergo a single turnover, which suggests it is a suicide enzyme. May have additional roles in adaptation to various stress conditions and in DNA damage tolerance. This chain is Thiamine thiazole synthase, chloroplastic (THI1), found in Populus euphratica (Euphrates poplar).